The following is a 293-amino-acid chain: Small ribosomal subunit biogenesis GTPase RsgA (293 aa).

The region spanning 63-223 is the CP-type G domain; it reads KNELVRPPIA…VADTPGFSSL (161 aa). GTP contacts are provided by residues 112-115 and 166-174; these read SKMD and GQSGVGKSS. Zn(2+)-binding residues include Cys247, Cys252, His254, and Cys260.

This sequence belongs to the TRAFAC class YlqF/YawG GTPase family. RsgA subfamily. In terms of assembly, monomer. Associates with 30S ribosomal subunit, binds 16S rRNA. Zn(2+) serves as cofactor.

Its subcellular location is the cytoplasm. One of several proteins that assist in the late maturation steps of the functional core of the 30S ribosomal subunit. Helps release RbfA from mature subunits. May play a role in the assembly of ribosomal proteins into the subunit. Circularly permuted GTPase that catalyzes slow GTP hydrolysis, GTPase activity is stimulated by the 30S ribosomal subunit. The chain is Small ribosomal subunit biogenesis GTPase RsgA from Bacillus cytotoxicus (strain DSM 22905 / CIP 110041 / 391-98 / NVH 391-98).